Consider the following 250-residue polypeptide: MAPYRIVFIRHGESVYNEENRFCGWHDADLSGQGITEAKQAGQLLRQNHFTFDIAYTSVLKRAIKTLNFVLDELDLNWIPVTKTWRLNERMYGALQGLNKSETAAKHGEEQVKIWRRAYDIPPPPVDISDPRFPGNEPKYALLDSSCIPRTECLKDTVQRVLPFWFDTISASIKRREQVLIVAHGNSLRALIKYLDNTSDSDIVELNIPTGIPLVYELDANLKPTKHYYLADEATVAAAIARVANQGKKK.

Positions 10, 11, 17, 24, 62, 89, 92, 100, 116, 117, 184, 185, and 186 each coordinate (2R)-2,3-bisphosphoglycerate. The active-site Tele-phosphohistidine intermediate is the His-11. Gly-24 is a binding site for (2R)-3-phosphoglycerate. (2R)-3-phosphoglycerate is bound by residues Glu-89, Tyr-92, Lys-100, Arg-116, and Arg-117. Glu-89 (proton donor/acceptor) is an active-site residue. Position 186 (Asn-186) interacts with (2R)-3-phosphoglycerate.

The protein belongs to the phosphoglycerate mutase family. BPG-dependent PGAM subfamily. In terms of tissue distribution, ubiquitously expressed with the highest expression in the sub-tegumental muscle layer (at protein level). Expressed in the tegument (at protein level).

It localises to the tegument. It carries out the reaction (2R)-2-phosphoglycerate = (2R)-3-phosphoglycerate. It functions in the pathway carbohydrate degradation; glycolysis; pyruvate from D-glyceraldehyde 3-phosphate: step 3/5. With respect to regulation, strongly activated by 2,3-bisphosphoglycerate (2,3-BPG). Inhibited by vanadate in a dose-dependent manner. In terms of biological role, catalyzes interconversion of 3- and 2-phosphoglycerate with 2,3-bisphosphoglycerate (2,3-BPG) as the primer of the reaction. Schistosomula have significant surface phosphoglycerate mutase activity also without 2,3-BPG. Binds human plasminogen and enhances its conversion to active thrombolytic plasmin in the presence of human tissue plasminogen activator (tPA) in vitro. Host-interactive surface protein, which may degrade vascular blood clots surrounding the worm in vivo and thus may help survival of the parasite in its host microenvironment. In Schistosoma mansoni (Blood fluke), this protein is 2,3-bisphosphoglycerate-dependent phosphoglycerate mutase.